We begin with the raw amino-acid sequence, 529 residues long: Peptide chain release factor 3 (529 aa).

The 270-residue stretch at 11-280 (NSRRTFAIIS…AFINWAPEPK (270 aa)) folds into the tr-type G domain. GTP-binding positions include 20–27 (SHPDAGKT), 88–92 (DTPGH), and 142–145 (NKMD).

It belongs to the TRAFAC class translation factor GTPase superfamily. Classic translation factor GTPase family. PrfC subfamily.

It is found in the cytoplasm. Increases the formation of ribosomal termination complexes and stimulates activities of RF-1 and RF-2. It binds guanine nucleotides and has strong preference for UGA stop codons. It may interact directly with the ribosome. The stimulation of RF-1 and RF-2 is significantly reduced by GTP and GDP, but not by GMP. The polypeptide is Peptide chain release factor 3 (Acinetobacter baylyi (strain ATCC 33305 / BD413 / ADP1)).